The primary structure comprises 433 residues: Phosphomethylpyrimidine synthase (433 aa).

Substrate-binding positions include Asn66, Met94, Tyr123, His162, 184-186, 225-228, and Glu264; these read SRG and DALR. His268 contributes to the Zn(2+) binding site. Tyr291 is a binding site for substrate. His332 contributes to the Zn(2+) binding site. Cys408, Cys411, and Cys415 together coordinate [4Fe-4S] cluster.

This sequence belongs to the ThiC family. [4Fe-4S] cluster serves as cofactor.

The enzyme catalyses 5-amino-1-(5-phospho-beta-D-ribosyl)imidazole + S-adenosyl-L-methionine = 4-amino-2-methyl-5-(phosphooxymethyl)pyrimidine + CO + 5'-deoxyadenosine + formate + L-methionine + 3 H(+). Its pathway is cofactor biosynthesis; thiamine diphosphate biosynthesis. In terms of biological role, catalyzes the synthesis of the hydroxymethylpyrimidine phosphate (HMP-P) moiety of thiamine from aminoimidazole ribotide (AIR) in a radical S-adenosyl-L-methionine (SAM)-dependent reaction. The sequence is that of Phosphomethylpyrimidine synthase from Saccharolobus islandicus (strain M.14.25 / Kamchatka #1) (Sulfolobus islandicus).